The following is a 374-amino-acid chain: 4-hydroxy-3-methylbut-2-en-1-yl diphosphate synthase (flavodoxin) (374 aa).

4 residues coordinate [4Fe-4S] cluster: Cys268, Cys271, Cys303, and Glu310.

It belongs to the IspG family. [4Fe-4S] cluster serves as cofactor.

It carries out the reaction (2E)-4-hydroxy-3-methylbut-2-enyl diphosphate + oxidized [flavodoxin] + H2O + 2 H(+) = 2-C-methyl-D-erythritol 2,4-cyclic diphosphate + reduced [flavodoxin]. It participates in isoprenoid biosynthesis; isopentenyl diphosphate biosynthesis via DXP pathway; isopentenyl diphosphate from 1-deoxy-D-xylulose 5-phosphate: step 5/6. Its function is as follows. Converts 2C-methyl-D-erythritol 2,4-cyclodiphosphate (ME-2,4cPP) into 1-hydroxy-2-methyl-2-(E)-butenyl 4-diphosphate. The protein is 4-hydroxy-3-methylbut-2-en-1-yl diphosphate synthase (flavodoxin) of Geobacillus kaustophilus (strain HTA426).